Consider the following 62-residue polypeptide: Photosystem II reaction center protein Z (62 aa).

The next 2 membrane-spanning stretches (helical) occupy residues 8-28 (LIAA…VVFS) and 41-61 (WGGA…SIVV).

This sequence belongs to the PsbZ family. In terms of assembly, PSII is composed of 1 copy each of membrane proteins PsbA, PsbB, PsbC, PsbD, PsbE, PsbF, PsbH, PsbI, PsbJ, PsbK, PsbL, PsbM, PsbT, PsbX, PsbY, PsbZ, Psb30/Ycf12, peripheral proteins PsbO, CyanoQ (PsbQ), PsbU, PsbV and a large number of cofactors. It forms dimeric complexes.

It localises to the cellular thylakoid membrane. May control the interaction of photosystem II (PSII) cores with the light-harvesting antenna, regulates electron flow through the 2 photosystem reaction centers. PSII is a light-driven water plastoquinone oxidoreductase, using light energy to abstract electrons from H(2)O, generating a proton gradient subsequently used for ATP formation. This chain is Photosystem II reaction center protein Z, found in Acaryochloris marina (strain MBIC 11017).